The sequence spans 239 residues: Ankyrin repeat domain-containing protein 49 (239 aa).

A Phosphoserine modification is found at Ser49. ANK repeat units follow at residues 73–103 (DPSRLLLWAAEKNRLTTVRRLLSEKATHVNT), 107–136 (DEYTPLHRAAYSGHLDIVQELIAQGADVHA), 140–169 (DGWTPLHSACKWNNTRVASFLLQHDADINA), and 173–206 (GLLTPLHLAAGNRDSKDTLELLLMNRYVKPGLKN).

Widely expressed in fetus, at a high level in fetal liver, brain and lung.

Its subcellular location is the nucleus. Functionally, induces HBG1 expression. May have a role in spermatogenesis where it promotes autophagy in response to serum starvation, via the NF-kappaB pathway. The protein is Ankyrin repeat domain-containing protein 49 (ANKRD49) of Homo sapiens (Human).